We begin with the raw amino-acid sequence, 1077 residues long: Adenylate cyclase type 4 (1077 aa).

The Cytoplasmic segment spans residues 1–28; sequence MARLFSPRPPPSEDLFYETYYSLSQQYP. The next 6 helical transmembrane spans lie at 29–50, 61–80, 94–117, 120–138, 141–162, and 170–190; these read LLLLLLGIVLCALAALLAVAWA, FLTTVLCALGGFSLLLGLAS, GLVWVALLALGHAFLFTGGVVSAW, VSYFLFVIFTAYAMLPLGM, AAVAGLASSLSHLLVLGLYLGP, and LLPQLAANAVLFLCGNVAGVY. The Cytoplasmic segment spans residues 191–585; the sequence is HKALMERALR…YRLSAIPAFK (395 aa). The Mg(2+) site is built by Asp278, Ile279, and Asp322. Residues 278-283, 320-322, and Arg366 contribute to the ATP site; these read DIVGFT and LGD. A Phosphoserine modification is found at Ser520. Position 536 is a phosphothreonine (Thr536). The next 3 helical transmembrane spans lie at 586–607, 611–633, and 664–687; these read YYEACTFLVFLSNFIIQMLVTN, ALAITYSITFLLFLLILFVCFSE, and IALGTATILLVFAMAITSLFFFPT. The Extracellular segment spans residues 688-714; that stretch reads SSDCPFQAPNVSSMISNLSWELPGSLP. 2 N-linked (GlcNAc...) asparagine glycosylation sites follow: Asn697 and Asn704. The next 3 membrane-spanning stretches (helical) occupy residues 715–736, 744–764, and 791–807; these read LISVPYSMHCCTLGFLSCSLFL, LLLLLLWLAASCSLFLHSHAW, and MGAISFFIFFFTLLVLA. Topologically, residues 808-1077 are cytoplasmic; sequence RQNEYYCRLD…RTGPPSATLG (270 aa). Residues Lys925, 1005–1007, 1012–1016, and Lys1052 each bind ATP; these read DIW and NVASR.

Belongs to the adenylyl cyclase class-4/guanylyl cyclase family. Requires Mg(2+) as cofactor. The cofactor is Mn(2+). Detected in the zona glomerulosa and the zona fasciculata in the adrenal gland (at protein level).

The protein localises to the cell membrane. The protein resides in the cytoplasm. The catalysed reaction is ATP = 3',5'-cyclic AMP + diphosphate. Activated by forskolin. Insensitive to calcium/calmodulin. Stimulated by GNAS and by the G-protein beta and gamma subunit complex. Functionally, catalyzes the formation of the signaling molecule cAMP in response to G-protein signaling. The sequence is that of Adenylate cyclase type 4 (ADCY4) from Homo sapiens (Human).